The sequence spans 760 residues: Prolyl endopeptidase (760 aa).

Residues S609, D693, and H730 each act as charge relay system in the active site.

It belongs to the peptidase S9A family.

It localises to the cytoplasm. The enzyme catalyses Hydrolysis of Pro-|-Xaa &gt;&gt; Ala-|-Xaa in oligopeptides.. Inhibited by chymostatin, Boc-Glu(NHO-Bz)-Pyrrolidide, Z-Pro-L-prolinal dimethyacetal and the peptide H-H-L-P-P-P-V-OH. Functionally, cleaves peptide bonds on the C-terminal side of prolyl residues within peptides that are up to approximately 30 amino acids long. This Dictyostelium discoideum (Social amoeba) protein is Prolyl endopeptidase (prep).